The following is a 120-amino-acid chain: NAD(P)H-quinone oxidoreductase subunit 3, chloroplastic (120 aa).

3 helical membrane passes run 9–29, 64–84, and 88–108; these read IFWT…WISG, MFAL…PWAM, and VLGV…VVGL.

The protein belongs to the complex I subunit 3 family. As to quaternary structure, NDH is composed of at least 16 different subunits, 5 of which are encoded in the nucleus.

The protein localises to the plastid. It is found in the chloroplast thylakoid membrane. The enzyme catalyses a plastoquinone + NADH + (n+1) H(+)(in) = a plastoquinol + NAD(+) + n H(+)(out). It catalyses the reaction a plastoquinone + NADPH + (n+1) H(+)(in) = a plastoquinol + NADP(+) + n H(+)(out). Functionally, NDH shuttles electrons from NAD(P)H:plastoquinone, via FMN and iron-sulfur (Fe-S) centers, to quinones in the photosynthetic chain and possibly in a chloroplast respiratory chain. The immediate electron acceptor for the enzyme in this species is believed to be plastoquinone. Couples the redox reaction to proton translocation, and thus conserves the redox energy in a proton gradient. This chain is NAD(P)H-quinone oxidoreductase subunit 3, chloroplastic, found in Lolium perenne (Perennial ryegrass).